Reading from the N-terminus, the 1096-residue chain is Lysine-specific demethylase PHF2 (1096 aa).

The PHD-type zinc-finger motif lies at 5-56 (PVYCVCRLPYDVTRFMIECDACKDWFHGSCVGVEEEEAPDIDIYHCPNCEKT). Positions 193 and 246 each coordinate 2-oxoglutarate. The JmjC domain occupies 197 to 353 (FSDTRMSSFV…MQMRAYEVER (157 aa)). Fe cation-binding residues include His249 and Asp251. Tyr259, Lys266, Tyr321, and Thr323 together coordinate 2-oxoglutarate. Tyr321 lines the Fe cation pocket. 2 disordered regions span residues 447-634 (KAVR…KDNK) and 646-674 (GSKALRPPTSPGVFGALQNFKEDKPKPVR). A Phosphoserine modification is found at Ser474. The residue at position 479 (Thr479) is a Phosphothreonine. Positions 503 to 518 (SKIPKPPKPPKPPRPP) are enriched in pro residues. Ser539 is subject to Phosphoserine. 2 stretches are compositionally biased toward basic and acidic residues: residues 548–563 (LEAHTKEALTKMEPPK) and 578–624 (DVVH…KLEK). Ser655 carries the phosphoserine modification. The span at 665–674 (FKEDKPKPVR) shows a compositional bias: basic and acidic residues. 2 positions are modified to phosphoserine: Ser681 and Ser705. Residue Lys711 forms a Glycyl lysine isopeptide (Lys-Gly) (interchain with G-Cter in SUMO2) linkage. Disordered stretches follow at residues 719–799 (TKPK…QGML), 817–846 (AGQAKGSSLAAHGARKNGGGSGKSAGKRLL), and 877–1078 (YPSL…MATA). At Lys720 the chain carries N6-acetyllysine. Position 728 is a phosphotyrosine (Tyr728). Residues 729 to 757 (KSDDSSDEGSLHIDTDTKPGRNARVKKES) are compositionally biased toward basic and acidic residues. 4 positions are modified to phosphoserine: Ser730, Ser733, Ser734, and Ser738. Residues Ser879, Ser882, and Ser899 each carry the phosphoserine modification. A compositionally biased stretch (basic and acidic residues) spans 916–925 (RQDRPVREGT). Over residues 949 to 959 (SKKKKSAKRKL) the composition is skewed to basic residues. Low complexity-rich tracts occupy residues 960-1009 (TPNT…EGSS) and 1027-1040 (TAAGTFTGAQAGRT). Positions 1053-1065 (RRPSASSPNNNTA) are enriched in polar residues. Phosphoserine; by PKA is present on Ser1056.

The protein belongs to the JHDM1 histone demethylase family. JHDM1D subfamily. As to quaternary structure, component of the PHF2-ARID5B complex, at least composed of PHF2 and ARID5B. Interacts with HNF4A and NR1H4. Interacts with RELA. Post-translationally, phosphorylated by PKA on specific serine residues, leading to the formation of an active lysine demethylase complex. Widely expressed, including in liver (at protein level).

Its subcellular location is the nucleus. It is found in the nucleolus. The protein localises to the chromosome. It localises to the centromere. The protein resides in the kinetochore. The enzyme catalyses N(6),N(6)-dimethyl-L-lysyl(9)-[histone H3] + 2-oxoglutarate + O2 = N(6)-methyl-L-lysyl(9)-[histone H3] + formaldehyde + succinate + CO2. Enzymatically inactive by itself, and become active following phosphorylation by PKA. Lysine demethylase that demethylates both histones and non-histone proteins. Enzymatically inactive by itself, and becomes active following phosphorylation by PKA: forms a complex with ARID5B and mediates demethylation of methylated ARID5B. Demethylation of ARID5B leads to target the PHF2-ARID5B complex to target promoters, where PHF2 mediates demethylation of dimethylated 'Lys-9' of histone H3 (H3K9me2), followed by transcription activation of target genes. The PHF2-ARID5B complex acts as a coactivator of HNF4A in liver. PHF2 is recruited to trimethylated 'Lys-4' of histone H3 (H3K4me3) at rDNA promoters and promotes expression of rDNA. Involved in the activation of toll-like receptor 4 (TLR4)-target inflammatory genes in macrophages by catalyzing the demethylation of trimethylated histone H4 lysine 20 (H4K20me3) at the gene promoters. The sequence is that of Lysine-specific demethylase PHF2 from Homo sapiens (Human).